Here is a 91-residue protein sequence, read N- to C-terminus: Envelope glycoprotein N (91 aa).

A signal peptide spans 1 to 23; it reads MGPPRRVCRAGLLFVLLVALAAG. Residues 23-48 form a disordered region; the sequence is GDAGPRGEPPGEEGGRDGIGGARCET. The Virion surface portion of the chain corresponds to 24 to 55; sequence DAGPRGEPPGEEGGRDGIGGARCETQNTGQMS. A helical membrane pass occupies residues 56 to 76; sequence APGALVPFYVGMASMGVCIIA. The Intravirion segment spans residues 77 to 91; it reads HVCQICQRLLAAGHA.

This sequence belongs to the herpesviridae glycoprotein N family. Interacts (via N-terminus) with gM (via N-terminus). The gM-gN heterodimer forms the gCII complex.

It is found in the virion membrane. Its subcellular location is the host membrane. It localises to the host Golgi apparatus. The protein resides in the host trans-Golgi network. Envelope glycoprotein necessary for proper maturation of gM and modulation of its membrane fusion activity. Also plays a critical role in virion morphogenesis. The polypeptide is Envelope glycoprotein N (Homo sapiens (Human)).